Consider the following 297-residue polypeptide: Beta-glucoside kinase (297 aa).

5-11 (AFDIGGT) lines the ATP pocket.

It belongs to the ROK (NagC/XylR) family. As to quaternary structure, homotetramer.

It catalyses the reaction D-cellobiose + ATP = 6-phospho-beta-D-glucosyl-(1-&gt;4)-D-glucose + ADP + H(+). Is inhibited by N-ethylmaleimide in vitro, but ATP affords considerable protection against the inhibitor. Functionally, catalyzes the ATP-dependent phosphorylation of a wide variety of beta-D-glucosides, to produce 6-phospho-beta-D-glucosides including cellobiose-6'-P, gentiobiose-6'-P, cellobiitol-6-P, salicin-6-P, and arbutin-6-P. Is not able to phosphorylate alpha-D-glucosides. May have a dual role of kinase and transcriptional regulator of the cellobiose-PTS operon. In Klebsiella pneumoniae, this protein is Beta-glucoside kinase (bglK).